A 305-amino-acid polypeptide reads, in one-letter code: MPSLPVLIDTTPDFDFAPAQDATQKRTLLLAPPSIAAHEEKLRDIFATFDRSVTDLQMLDRLSAGFVTLPASAYDLVLVLTDTNGARRNEALGLLTRDVFNVLTPAMKPSAQLKLQDGPFQATEGREAILAGLVENNGAFEKPQYQEAAVPLRFGLKKKNKVAPEPVKVESVGFVDNYDDDELIDEDDLLAEEDLGRPVQQPAECKPDIAKKRRRACKDCTCGLAAQLEAEDAERREKANAELNVLKLKTDELNDEVDFTVQGKTGSCNSCSLGDAFRCEGCPFIGLPAFKPGEEVRIMNDMAQL.

The segment at 21–150 is N-terminal SAM-like domain; the sequence is DATQKRTLLL…EKPQYQEAAV (130 aa). Residues 151-195 form a linker region; the sequence is PLRFGLKKKNKVAPEPVKVESVGFVDNYDDDELIDEDDLLAEEDL. [2Fe-2S] cluster is bound by residues C205, C217, C220, and C222. Positions 205–222 are fe-S binding site A; sequence CKPDIAKKRRRACKDCTC. Residues C268, C271, C279, and C282 each contribute to the [4Fe-4S] cluster site. 2 short sequence motifs (cx2C motif) span residues 268-271 and 279-282; these read CNSC and CEGC. The fe-S binding site B stretch occupies residues 268 to 282; it reads CNSCSLGDAFRCEGC.

Belongs to the anamorsin family. Monomer. Interacts with tah18. Interacts with mia40. [2Fe-2S] cluster is required as a cofactor. [4Fe-4S] cluster serves as cofactor.

The protein resides in the cytoplasm. Its subcellular location is the mitochondrion intermembrane space. Component of the cytosolic iron-sulfur (Fe-S) protein assembly (CIA) machinery required for the maturation of extramitochondrial Fe-S proteins. Part of an electron transfer chain functioning in an early step of cytosolic Fe-S biogenesis, facilitating the de novo assembly of a [4Fe-4S] cluster on the scaffold complex cfd1-nbp35. Electrons are transferred to dre2 from NADPH via the FAD- and FMN-containing protein tah18. Tah18-dre2 are also required for the assembly of the diferric tyrosyl radical cofactor of ribonucleotide reductase (RNR), probably by providing electrons for reduction during radical cofactor maturation in the catalytic small subunit rnr2. The polypeptide is Fe-S cluster assembly protein dre2 (Talaromyces marneffei (strain ATCC 18224 / CBS 334.59 / QM 7333) (Penicillium marneffei)).